A 556-amino-acid chain; its full sequence is 2-succinyl-5-enolpyruvyl-6-hydroxy-3-cyclohexene-1-carboxylate synthase (556 aa).

This sequence belongs to the TPP enzyme family. MenD subfamily. Homodimer. Mg(2+) is required as a cofactor. Mn(2+) serves as cofactor. Requires thiamine diphosphate as cofactor.

It carries out the reaction isochorismate + 2-oxoglutarate + H(+) = 5-enolpyruvoyl-6-hydroxy-2-succinyl-cyclohex-3-ene-1-carboxylate + CO2. It participates in quinol/quinone metabolism; 1,4-dihydroxy-2-naphthoate biosynthesis; 1,4-dihydroxy-2-naphthoate from chorismate: step 2/7. It functions in the pathway quinol/quinone metabolism; menaquinone biosynthesis. Catalyzes the thiamine diphosphate-dependent decarboxylation of 2-oxoglutarate and the subsequent addition of the resulting succinic semialdehyde-thiamine pyrophosphate anion to isochorismate to yield 2-succinyl-5-enolpyruvyl-6-hydroxy-3-cyclohexene-1-carboxylate (SEPHCHC). The chain is 2-succinyl-5-enolpyruvyl-6-hydroxy-3-cyclohexene-1-carboxylate synthase from Salmonella typhi.